A 634-amino-acid polypeptide reads, in one-letter code: E3 ubiquitin/ISG15 ligase TRIM25 (634 aa).

An RING-type zinc finger spans residues 13–54 (CSVCLELFKEPVTTPCGHNFCMSCLDETWVVQGPPYRCPQCR). A Phosphothreonine modification is found at T90. S99 is subject to Phosphoserine. K116 is covalently cross-linked (Glycyl lysine isopeptide (Lys-Gly) (interchain with G-Cter in ISG15)). Residues 215-305 (ATKALEDVRS…LIMDKGDEFE (91 aa)) are a coiled coil. K272 is subject to N6-acetyllysine. Position 277 is a phosphotyrosine (Y277). The disordered stretch occupies residues 353 to 437 (KLQKKSEEHN…APKASAAQPD (85 aa)). Residues 363–376 (GSGNKGDQTQSTFK) are compositionally biased toward polar residues. The 191-residue stretch at 444–634 (KVLENFLTKS…AGTTLSICSK (191 aa)) folds into the B30.2/SPRY domain. K572 carries the N6-acetyllysine modification.

In terms of assembly, forms homodimers. Interacts (via SPRY domain) with RIGI (via CARD domain). Interacts with ZFHX3. Interacts with NLRP12; this interaction reduces the E3 ubiquitin ligase TRIM25-mediated 'Lys-63'-linked RIGI activation. Interacts with the KHDC3L/FILIA-OOEP/FLOPED scaffold complex and BLM at DNA replication forks. Interacts with RTN3; this interaction prevents RIGI ubiquitination. Interacts with YWHAE. Auto-ISGylated. In terms of tissue distribution, ubiquitous.

Its subcellular location is the cytoplasm. It is found in the stress granule. It localises to the nucleus. It catalyses the reaction S-ubiquitinyl-[E2 ubiquitin-conjugating enzyme]-L-cysteine + [acceptor protein]-L-lysine = [E2 ubiquitin-conjugating enzyme]-L-cysteine + N(6)-ubiquitinyl-[acceptor protein]-L-lysine.. The catalysed reaction is ATP + [ISG15] + [protein]-lysine = AMP + diphosphate + [protein]-N-ISGyllysine.. Its pathway is protein modification; protein ubiquitination. Functions as a ubiquitin E3 ligase and as an ISG15 E3 ligase. Involved in innate immune defense against viruses by mediating ubiquitination of RIGI and IFIH1. Mediates 'Lys-63'-linked polyubiquitination of the RIGI N-terminal CARD-like region and may play a role in signal transduction that leads to the production of interferons in response to viral infection. Mediates 'Lys-63'-linked polyubiquitination of IFIH1. Promotes ISGylation of 14-3-3 sigma (SFN), an adapter protein implicated in the regulation of a large spectrum signaling pathway. Mediates estrogen action in various target organs. Mediates the ubiquitination and subsequent proteasomal degradation of ZFHX3. Plays a role in promoting the restart of stalled replication forks via interaction with the KHDC3L-OOEP scaffold and subsequent ubiquitination of BLM, resulting in the recruitment and retainment of BLM at DNA replication forks. Plays an essential role in the antiviral activity of ZAP/ZC3HAV1; an antiviral protein which inhibits the replication of certain viruses. Mechanistically, mediates 'Lys-63'-linked polyubiquitination of ZAP/ZC3HAV1 that is required for its optimal binding to target mRNA. Also mediates the ubiquitination of various substrates implicated in stress granule formation, nonsense-mediated mRNA decay, nucleoside synthesis and mRNA translation and stability. In Mus musculus (Mouse), this protein is E3 ubiquitin/ISG15 ligase TRIM25 (Trim25).